The sequence spans 478 residues: Membrane-bound lytic murein transglycosylase F (478 aa).

The first 22 residues, 1-22 (MTRFLFAIILGFLLTACQQVTV), serve as a signal peptide directing secretion. Positions 23 to 257 (EETEYVPHKL…HLNEKYFGHV (235 aa)) are non-LT domain. The segment at 258 to 478 (KRFDYIDTRA…PGTLSPDKPK (221 aa)) is LT domain. Glu-302 is a catalytic residue. Residues 446–478 (SKQQNSDEEEPSDLASEDGPAPVPGTLSPDKPK) form a disordered region. Acidic residues predominate over residues 451–461 (SDEEEPSDLAS).

In the N-terminal section; belongs to the bacterial solute-binding protein 3 family. The protein in the C-terminal section; belongs to the transglycosylase Slt family.

Its subcellular location is the cell outer membrane. It catalyses the reaction Exolytic cleavage of the (1-&gt;4)-beta-glycosidic linkage between N-acetylmuramic acid (MurNAc) and N-acetylglucosamine (GlcNAc) residues in peptidoglycan, from either the reducing or the non-reducing ends of the peptidoglycan chains, with concomitant formation of a 1,6-anhydrobond in the MurNAc residue.. In terms of biological role, murein-degrading enzyme that degrades murein glycan strands and insoluble, high-molecular weight murein sacculi, with the concomitant formation of a 1,6-anhydromuramoyl product. Lytic transglycosylases (LTs) play an integral role in the metabolism of the peptidoglycan (PG) sacculus. Their lytic action creates space within the PG sacculus to allow for its expansion as well as for the insertion of various structures such as secretion systems and flagella. This is Membrane-bound lytic murein transglycosylase F from Shewanella sp. (strain ANA-3).